A 213-amino-acid chain; its full sequence is Orotidine 5'-phosphate decarboxylase (213 aa).

Residues Asp-6, Lys-25, 52 to 61 (DLKLADIDNT), Ser-109, 158 to 168 (PGVGAQGAMIG), Gly-181, and Arg-182 each bind substrate. Lys-54 (proton donor) is an active-site residue.

Belongs to the OMP decarboxylase family. Type 1 subfamily. As to quaternary structure, homodimer.

The catalysed reaction is orotidine 5'-phosphate + H(+) = UMP + CO2. The protein operates within pyrimidine metabolism; UMP biosynthesis via de novo pathway; UMP from orotate: step 2/2. Functionally, catalyzes the decarboxylation of orotidine 5'-monophosphate (OMP) to uridine 5'-monophosphate (UMP). This chain is Orotidine 5'-phosphate decarboxylase, found in Sulfurisphaera tokodaii (strain DSM 16993 / JCM 10545 / NBRC 100140 / 7) (Sulfolobus tokodaii).